The primary structure comprises 550 residues: Chaperonin GroEL 2 (550 aa).

ATP is bound by residues 30–33, lysine 51, 87–91, glycine 415, 480–482, and aspartate 496; these read TLGP, DGTTT, and NAA.

This sequence belongs to the chaperonin (HSP60) family. As to quaternary structure, forms a cylinder of 14 subunits composed of two heptameric rings stacked back-to-back. Interacts with the co-chaperonin GroES.

The protein localises to the cytoplasm. The enzyme catalyses ATP + H2O + a folded polypeptide = ADP + phosphate + an unfolded polypeptide.. Together with its co-chaperonin GroES, plays an essential role in assisting protein folding. The GroEL-GroES system forms a nano-cage that allows encapsulation of the non-native substrate proteins and provides a physical environment optimized to promote and accelerate protein folding. This is Chaperonin GroEL 2 from Erythrobacter litoralis (strain HTCC2594).